Reading from the N-terminus, the 389-residue chain is uncharacterized protein (389 aa).

A run of 4 helical transmembrane segments spans residues 31 to 51 (LFIVHSAIGAGVAYWIAVEVI), 96 to 116 (IMQIGTGYWQIFVVVGLALLV), 123 to 143 (APLVSNQMAIGGILIATMFPP), and 152 to 172 (MIDAFIGGGVGILVIALLPSS).

The protein to M.tuberculosis Rv2571c.

The protein resides in the cell membrane. This is an uncharacterized protein from Corynebacterium glutamicum (strain ATCC 13032 / DSM 20300 / JCM 1318 / BCRC 11384 / CCUG 27702 / LMG 3730 / NBRC 12168 / NCIMB 10025 / NRRL B-2784 / 534).